A 242-amino-acid polypeptide reads, in one-letter code: Large ribosomal subunit protein uL1 (242 aa).

Belongs to the universal ribosomal protein uL1 family. As to quaternary structure, part of the 50S ribosomal subunit.

Its function is as follows. Binds directly to 23S rRNA. The L1 stalk is quite mobile in the ribosome, and is involved in E site tRNA release. Protein L1 is also a translational repressor protein, it controls the translation of the L11 operon by binding to its mRNA. This is Large ribosomal subunit protein uL1 from Dictyoglomus thermophilum (strain ATCC 35947 / DSM 3960 / H-6-12).